A 662-amino-acid polypeptide reads, in one-letter code: Eukaryotic peptide chain release factor GTP-binding subunit (662 aa).

Residues 1 to 220 (MASNQPNNGE…PATVTEDATD (220 aa)) are disordered. The segment covering 26–40 (AKAPTFTPKAAPFIP) has biased composition (low complexity). Residues 62-89 (YTGQGQNSNSPHPTKSYQQYYQKPTGNT) show a composition bias toward polar residues. Positions 91–102 (DEDKSRVPDFSK) are enriched in basic and acidic residues. Residues 122–134 (GGNTSAPKSTKPI) are compositionally biased toward polar residues. Residues 141 to 158 (TKAPTTTKPAAPAAQSKT) are compositionally biased toward low complexity. Residue Thr-182 is modified to Phosphothreonine. The span at 192-213 (AKTPSAPAAALKKAAEAAEPAT) shows a compositional bias: low complexity. One can recognise a tr-type G domain in the interval 236–464 (KEHVNIVFIG…LDSMTHLERK (229 aa)). Residues 245–252 (GHVDAGKS) are G1. A GTP-binding site is contributed by 245–252 (GHVDAGKS). The interval 301-305 (GKTVE) is G2. Residues 322–325 (DAPG) are G3. GTP-binding positions include 384 to 387 (NKMD) and 428 to 429 (AY). A G4 region spans residues 384–387 (NKMD). The G5 stretch occupies residues 427–429 (SAY). Residue Ser-539 is modified to Phosphoserine.

Belongs to the TRAFAC class translation factor GTPase superfamily. Classic translation factor GTPase family. ERF3 subfamily. Component of the eRF1-eRF3-GTP ternary complex, composed of sup45/eRF1, sup35/eRF3 and GTP.

The protein resides in the cytoplasm. The enzyme catalyses GTP + H2O = GDP + phosphate + H(+). Its function is as follows. GTPase component of the eRF1-eRF3-GTP ternary complex, a ternary complex that mediates translation termination in response to the termination codons. Sup35/eRF3 mediates sup45/ERF1 delivery to stop codons: The eRF1-eRF3-GTP complex binds to a stop codon in the ribosomal A-site. GTP hydrolysis by sup35/eRF3 induces a conformational change that leads to its dissociation, permitting sup45/eRF1 to accommodate fully in the A-site. This Schizosaccharomyces pombe (strain 972 / ATCC 24843) (Fission yeast) protein is Eukaryotic peptide chain release factor GTP-binding subunit (sup35).